Here is a 259-residue protein sequence, read N- to C-terminus: tRNA (guanine-N(1)-)-methyltransferase (259 aa).

Residues G113 and I133–L138 contribute to the S-adenosyl-L-methionine site.

Belongs to the RNA methyltransferase TrmD family. As to quaternary structure, homodimer.

The protein localises to the cytoplasm. It carries out the reaction guanosine(37) in tRNA + S-adenosyl-L-methionine = N(1)-methylguanosine(37) in tRNA + S-adenosyl-L-homocysteine + H(+). Its function is as follows. Specifically methylates guanosine-37 in various tRNAs. In Xanthomonas oryzae pv. oryzae (strain MAFF 311018), this protein is tRNA (guanine-N(1)-)-methyltransferase.